Consider the following 225-residue polypeptide: UPF0758 protein NMB1038 (225 aa).

The region spanning 102–224 (VLSDPDTVAD…VCSFRQLGLM (123 aa)) is the MPN domain. Zn(2+)-binding residues include His173, His175, and Asp186. Residues 173-186 (HNHPGGSPEPSQED) carry the JAMM motif motif.

It belongs to the UPF0758 family.

The polypeptide is UPF0758 protein NMB1038 (Neisseria meningitidis serogroup B (strain ATCC BAA-335 / MC58)).